The chain runs to 364 residues: Inactive protein RESTRICTED TEV MOVEMENT 2 (364 aa).

The sHSP domain occupies 14–121 (VQYEDFVPKS…LPETSRTEAA (108 aa)). One copy of the A-1 repeat lies at 129 to 133 (LEEKR). The tract at residues 129–220 (LEEKRLLEES…LEERRLEERK (92 aa)) is 6 X 5 AA repeats A of L-E-E-[SKR]-[ERK]. The A-2 repeat unit spans residues 135–139 (LEESR). One copy of the A-3 repeat lies at 156–160 (LEEKE). Residues 163-176 (IRKLQEEAKAKEEA) form a B-1 repeat. Residues 163 to 206 (IRKLQEEAKAKEEAEMRKLQEEAKAKEEAAAKKLQEEIEAKEKL) form a 3 X 14 AA repeats B of [IMA]-[RK]-K-L-Q-E-E-A-K-A-K-E-[EK]-[LA] region. Residues 178-191 (MRKLQEEAKAKEEA) form a B-2 repeat. One copy of the B-3 repeat lies at 193 to 205 (AKKLQEEIEAKEK). One copy of the A-4 repeat lies at 206-210 (LEERK). The A-5 repeat unit spans residues 211–215 (LEERR). The stretch at 216 to 220 (LEERK) is one A-6 repeat. Residues 322-342 (LMMNVGVAALVIFALGAYVSY) traverse the membrane as a helical segment. The tract at residues 345–364 (CSSSSSSSSPSSSSSSTKPE) is disordered. Positions 346-364 (SSSSSSSSPSSSSSSTKPE) are enriched in low complexity.

The protein belongs to the small heat shock protein (HSP20) family.

Its subcellular location is the cell membrane. Its function is as follows. Seems to not be involved in heat resistance. Unable to mediate restriction of long-distance movement of the pathogenic tobacco etch virus (TEV) without causing a hypersensitive response or inducing systemic acquired resistance. In Arabidopsis thaliana (Mouse-ear cress), this protein is Inactive protein RESTRICTED TEV MOVEMENT 2 (RTM2).